The primary structure comprises 367 residues: Mitogen-activated protein kinase 12 (367 aa).

In terms of domain architecture, Protein kinase spans tyrosine 27–phenylalanine 311. ATP-binding positions include valine 33 to valine 41 and lysine 56. Aspartate 153 acts as the Proton acceptor in catalysis. At threonine 183 the chain carries Phosphothreonine; by MAP2K3 and MAP2K6. The TXY signature appears at threonine 183–tyrosine 185. Tyrosine 185 is subject to Phosphotyrosine.

Belongs to the protein kinase superfamily. CMGC Ser/Thr protein kinase family. MAP kinase subfamily. Monomer. Interacts with the PDZ domain of the syntrophin SNTA1. Interacts with SH3BP5. Interacts with LIN7C, SCRIB and SYNJ2BP. Interacts with PTPN4; this interaction induces the activation of PTPN4 phosphatase activity. The cofactor is Mg(2+). Dually phosphorylated on Thr-183 and Tyr-185 by MAP2K3/MKK3 and MAP2K6/MKK6, which activates the enzyme. In terms of processing, ubiquitinated. Ubiquitination leads to degradation by the proteasome pathway. As to expression, highly expressed in skeletal muscle and heart.

The protein resides in the cytoplasm. The protein localises to the nucleus. It is found in the mitochondrion. The enzyme catalyses L-seryl-[protein] + ATP = O-phospho-L-seryl-[protein] + ADP + H(+). It carries out the reaction L-threonyl-[protein] + ATP = O-phospho-L-threonyl-[protein] + ADP + H(+). Activated by phosphorylation on threonine and tyrosine. MAP2K3/MKK3 and MAP2K6/MKK6 are both essential for the activation of MAPK12 induced by environmental stress, whereas MAP2K6/MKK6 is the major MAPK12 activator in response to TNF-alpha. In terms of biological role, serine/threonine kinase which acts as an essential component of the MAP kinase signal transduction pathway. MAPK12 is one of the four p38 MAPKs which play an important role in the cascades of cellular responses evoked by extracellular stimuli such as pro-inflammatory cytokines or physical stress leading to direct activation of transcription factors such as ELK1 and ATF2. Accordingly, p38 MAPKs phosphorylate a broad range of proteins and it has been estimated that they may have approximately 200 to 300 substrates each. Some of the targets are downstream kinases such as MAPKAPK2, which are activated through phosphorylation and further phosphorylate additional targets. Plays a role in myoblast differentiation and also in the down-regulation of cyclin D1 in response to hypoxia in adrenal cells suggesting MAPK12 may inhibit cell proliferation while promoting differentiation. Phosphorylates DLG1. Following osmotic shock, MAPK12 in the cell nucleus increases its association with nuclear DLG1, thereby causing dissociation of DLG1-SFPQ complexes. This function is independent of its catalytic activity and could affect mRNA processing and/or gene transcription to aid cell adaptation to osmolarity changes in the environment. Regulates UV-induced checkpoint signaling and repair of UV-induced DNA damage and G2 arrest after gamma-radiation exposure. MAPK12 is involved in the regulation of SLC2A1 expression and basal glucose uptake in L6 myotubes; and negatively regulates SLC2A4 expression and contraction-mediated glucose uptake in adult skeletal muscle. C-Jun (JUN) phosphorylation is stimulated by MAPK14 and inhibited by MAPK12, leading to a distinct AP-1 regulation. MAPK12 is required for the normal kinetochore localization of PLK1, prevents chromosomal instability and supports mitotic cell viability. MAPK12-signaling is also positively regulating the expansion of transient amplifying myogenic precursor cells during muscle growth and regeneration. This is Mitogen-activated protein kinase 12 (MAPK12) from Homo sapiens (Human).